We begin with the raw amino-acid sequence, 130 residues long: Lysozyme C (130 aa).

Positions Lys-1–Leu-130 constitute a C-type lysozyme domain. Disulfide bonds link Cys-6–Cys-128, Cys-30–Cys-116, Cys-65–Cys-81, and Cys-77–Cys-95. Residues Glu-35 and Asp-53 contribute to the active site.

This sequence belongs to the glycosyl hydrolase 22 family. As to quaternary structure, monomer.

It catalyses the reaction Hydrolysis of (1-&gt;4)-beta-linkages between N-acetylmuramic acid and N-acetyl-D-glucosamine residues in a peptidoglycan and between N-acetyl-D-glucosamine residues in chitodextrins.. Functionally, lysozymes have primarily a bacteriolytic function; those in tissues and body fluids are associated with the monocyte-macrophage system and enhance the activity of immunoagents. The sequence is that of Lysozyme C (LYZ) from Camelus dromedarius (Dromedary).